The sequence spans 381 residues: MIISASTDYRAAAQRKLPPFLFHYIDGGAYAEYTLRRNVEDLSAIALRQRVLKNMSELSLETRLFDETLAMPVALAPVGLTGMYARRGEVQAARAAAAKGVPFTLSTVSVCPIEEVAPAIDRPMWFQLYVLKDRGFMRNALERAKAAGVTTLVFTVDMPVPGARYRDAHSGMSGPYAAPRRILQAMTHPAWAWDVGLLGKPHDLGNISTYRGNPTGLEDYIGWLGANFDPSISWKDLEWIREFWNGPMVIKGILDPEDAKDAVKFGADGIVVSNHGGRQLDGVLSSARALPAIADAVKGELAILADSGIRTGLDVVRMIALGADSVLLGRAFVYALAAAGEAGVRNLLELIEKEMRVAMVLTGAKSIGEISADSLVRELGA.

One can recognise an FMN hydroxy acid dehydrogenase domain in the interval 1 to 380 (MIISASTDYR…SADSLVRELG (380 aa)). Residue Y24 coordinates substrate. Residues S106 and Q127 each contribute to the FMN site. Y129 serves as a coordination point for substrate. Residue T155 coordinates FMN. Residue R164 participates in substrate binding. K251 serves as a coordination point for FMN. The active-site Proton acceptor is the H275. R278 provides a ligand contact to substrate. Residue 306-330 (DSGIRTGLDVVRMIALGADSVLLGR) coordinates FMN.

It belongs to the FMN-dependent alpha-hydroxy acid dehydrogenase family. As to quaternary structure, homotetramer. FMN is required as a cofactor.

It is found in the cell inner membrane. It carries out the reaction (S)-lactate + A = pyruvate + AH2. Catalyzes the conversion of L-lactate to pyruvate. Is coupled to the respiratory chain. In Pseudomonas paraeruginosa (strain DSM 24068 / PA7) (Pseudomonas aeruginosa (strain PA7)), this protein is L-lactate dehydrogenase.